Reading from the N-terminus, the 248-residue chain is Protein FAM133A (248 aa).

A compositionally biased stretch (basic and acidic residues) spans Asn-68–Leu-80. Positions Asn-68 to Arg-248 are disordered. A compositionally biased stretch (basic residues) spans Lys-90 to Cys-102. Over residues Arg-103–Ser-118 the composition is skewed to low complexity. The span at Gln-127–Ser-138 shows a compositional bias: basic residues. Composition is skewed to basic and acidic residues over residues His-147–Ser-156, Ser-163–Ser-175, and Arg-211–Glu-220. The segment covering Lys-221 to Arg-248 has biased composition (basic residues).

Belongs to the FAM133 family.

The protein is Protein FAM133A (FAM133A) of Homo sapiens (Human).